The sequence spans 379 residues: MNNTEFYDRLGVSKDASQDEIKKAYRRMSKKYHPDINKETGAEEKYKEVQEAYETLSDTQKRAAYDQYGAAGANGGFGGFDGGGFGGFDGGGFGGFEDIFSSFFGGGGMRNPNAPRQGDDLQYRVNLSFEEAIFGAEKEVSYNRESSCHTCSGSGAKPGTSPVTCQKCHGSGVINVDTQTPLGTMRRQVTCDVCQGSGQEIKEKCPTCHGTGHEKKTHKVSVKIPAGVETGQQIRLTGQGEAGFNGGPYGDLFVIINVLPSQQFERNGSTIYYTLKISFVQAALGDTIDIPTVHGAVEMSIPAGTQTGKTFRLRGKGAPKLRGGGQGDQHVTVNIVTPTKLNDAQKEALHAFAEASGDKMVHPKKKGFFDKVKDALDVD.

Residues 5–69 (EFYDRLGVSK…QKRAAYDQYG (65 aa)) enclose the J domain. Residues 135–217 (GAEKEVSYNR…CHGTGHEKKT (83 aa)) form a CR-type zinc finger. Positions 148, 151, 165, 168, 191, 194, 205, and 208 each coordinate Zn(2+). 4 CXXCXGXG motif repeats span residues 148-155 (CHTCSGSG), 165-172 (CQKCHGSG), 191-198 (CDVCQGSG), and 205-212 (CPTCHGTG).

Belongs to the DnaJ family. In terms of assembly, homodimer. It depends on Zn(2+) as a cofactor.

It is found in the cytoplasm. Participates actively in the response to hyperosmotic and heat shock by preventing the aggregation of stress-denatured proteins and by disaggregating proteins, also in an autonomous, DnaK-independent fashion. Unfolded proteins bind initially to DnaJ; upon interaction with the DnaJ-bound protein, DnaK hydrolyzes its bound ATP, resulting in the formation of a stable complex. GrpE releases ADP from DnaK; ATP binding to DnaK triggers the release of the substrate protein, thus completing the reaction cycle. Several rounds of ATP-dependent interactions between DnaJ, DnaK and GrpE are required for fully efficient folding. Also involved, together with DnaK and GrpE, in the DNA replication of plasmids through activation of initiation proteins. This Streptococcus agalactiae serotype III (strain NEM316) protein is Chaperone protein DnaJ.